A 392-amino-acid chain; its full sequence is S-adenosylmethionine synthase (392 aa).

H20 contributes to the ATP binding site. D22 is a Mg(2+) binding site. A K(+)-binding site is contributed by E48. Positions 61 and 106 each coordinate L-methionine. The flexible loop stretch occupies residues 106 to 116 (QSRDIINAIEK). Residues 171 to 173 (DSK), D248, 254 to 255 (RK), A271, and K275 each bind ATP. D248 is an L-methionine binding site. Residue K279 participates in L-methionine binding.

This sequence belongs to the AdoMet synthase family. As to quaternary structure, homotetramer; dimer of dimers. The cofactor is Mg(2+). K(+) is required as a cofactor.

The protein resides in the cytoplasm. The catalysed reaction is L-methionine + ATP + H2O = S-adenosyl-L-methionine + phosphate + diphosphate. It participates in amino-acid biosynthesis; S-adenosyl-L-methionine biosynthesis; S-adenosyl-L-methionine from L-methionine: step 1/1. Catalyzes the formation of S-adenosylmethionine (AdoMet) from methionine and ATP. The overall synthetic reaction is composed of two sequential steps, AdoMet formation and the subsequent tripolyphosphate hydrolysis which occurs prior to release of AdoMet from the enzyme. The sequence is that of S-adenosylmethionine synthase from Borreliella afzelii (strain PKo) (Borrelia afzelii).